Reading from the N-terminus, the 60-residue chain is Large ribosomal subunit protein uL30 (60 aa).

The protein belongs to the universal ribosomal protein uL30 family. As to quaternary structure, part of the 50S ribosomal subunit.

The protein is Large ribosomal subunit protein uL30 of Streptococcus pneumoniae serotype 2 (strain D39 / NCTC 7466).